Consider the following 450-residue polypeptide: Crh-like protein 4 (450 aa).

The first 21 residues, 1-21, serve as a signal peptide directing secretion; sequence MRLSLVGVAIGLLSSSAIVTA. The cysteines at positions 27 and 34 are disulfide-linked. One can recognise a GH16 domain in the interval 46-228; that stretch reads YDFTKGSSPD…WAGGETDYSA (183 aa). The active-site Nucleophile is Glu119. Catalysis depends on Glu123, which acts as the Proton donor. Residues Glu123, Lys201, Trp205, and Thr216 each coordinate chitin. Asn383 carries N-linked (GlcNAc...) asparagine glycosylation.

This sequence belongs to the glycosyl hydrolase 16 family. CRH1 subfamily. The GPI-like anchor contains a phosphoceramide lipid group. The anchor position has not been determined.

Its subcellular location is the cell membrane. The protein resides in the secreted. It is found in the cell wall. The enzyme catalyses Random endo-hydrolysis of N-acetyl-beta-D-glucosaminide (1-&gt;4)-beta-linkages in chitin and chitodextrins.. Its function is as follows. Dual chitinase/transglycosylase that plays a role in cell wall architecture. Chitinase and transglycosylase activities are coupled. Required for the polysaccharide cross-linking at the septa and the cell wall. More specifically, transfers chitin to 1,6-beta-glucan in the cell wall. In Aspergillus fumigatus (strain ATCC MYA-4609 / CBS 101355 / FGSC A1100 / Af293) (Neosartorya fumigata), this protein is Crh-like protein 4.